A 553-amino-acid chain; its full sequence is Arginine--tRNA ligase (553 aa).

The 'HIGH' region signature appears at 132–140 (PTGDLHIGH).

Belongs to the class-I aminoacyl-tRNA synthetase family. In terms of assembly, monomer.

It is found in the cytoplasm. The catalysed reaction is tRNA(Arg) + L-arginine + ATP = L-arginyl-tRNA(Arg) + AMP + diphosphate. In Staphylococcus aureus (strain Mu50 / ATCC 700699), this protein is Arginine--tRNA ligase.